Here is a 496-residue protein sequence, read N- to C-terminus: MIPVIALVGRPNVGKSTLFNRLTRTRDALVADFPGLTRDRKYGRAELDGEEFIIIDTGGIDGAEEGVETHMASQSLQAIQEADIVLFLVDARAGLMPADQGIAKHLRGVEKKTYLVANKTDGIDIDTALADFYSLGLGEIFPIAASHGRGVSQLIEQALLPIVGKFVEEEKELTEEEENAAYWAALEAEQKEQEEEEEEDDFDPTTLPVKLAIVGRPNVGKSTLTNRMLGEERVVVYDMPGTTRDSIYIPMERDGKEYILIDTAGVRKRGKVKETVEKFSVIKTLQAIEDCNVALLVIDAREGISDQDLSLLGYILNSGRSLVIAVNKWDGMTQEDREQVKDMLDLKLGFVDFARVHFISALHGSGVGNLFESIQEAYTCATRRVGTSMLTRIMKMAEDDHQPPLIRGRRVKMKYAHAGGYNPPVVVIHGNQVSDLPDSYKRYLMNYFRRTLQVMGTPIRIQFKEGENPYADKKNKLTASQIRKRKRLMAHLKKSK.

2 EngA-type G domains span residues 3-166 and 209-382; these read PVIA…VGKF and VKLA…TCAT. GTP is bound by residues 9 to 16, 56 to 60, 118 to 121, 215 to 222, 262 to 266, and 327 to 330; these read GRPNVGKS, DTGGI, NKTD, DTAGV, and NKWD. The region spanning 383 to 467 is the KH-like domain; sequence RRVGTSMLTR…PIRIQFKEGE (85 aa).

Belongs to the TRAFAC class TrmE-Era-EngA-EngB-Septin-like GTPase superfamily. EngA (Der) GTPase family. In terms of assembly, associates with the 50S ribosomal subunit.

Functionally, GTPase that plays an essential role in the late steps of ribosome biogenesis. The polypeptide is GTPase Der (Proteus mirabilis (strain HI4320)).